The sequence spans 368 residues: C6 finger domain transcription factor tcpZ (368 aa).

Positions 30–56 (CDACHASKVRCSGEPICARCQRDNVAC) form a DNA-binding region, zn(2)-C6 fungal-type. A disordered region spans residues 84–109 (FIEQRQRPAASQPPGHGTSRDSSVCA).

The protein localises to the nucleus. Its function is as follows. Transcription factor that specifically regulates the thioclapurine biosynthesis gene cluster. In Claviceps purpurea (strain 20.1) (Ergot fungus), this protein is C6 finger domain transcription factor tcpZ.